Consider the following 295-residue polypeptide: 4-hydroxy-tetrahydrodipicolinate synthase (295 aa).

Residue threonine 46 coordinates pyruvate. Tyrosine 134 (proton donor/acceptor) is an active-site residue. Lysine 162 serves as the catalytic Schiff-base intermediate with substrate. Isoleucine 205 contributes to the pyruvate binding site.

It belongs to the DapA family. As to quaternary structure, homotetramer; dimer of dimers.

It is found in the cytoplasm. It catalyses the reaction L-aspartate 4-semialdehyde + pyruvate = (2S,4S)-4-hydroxy-2,3,4,5-tetrahydrodipicolinate + H2O + H(+). It functions in the pathway amino-acid biosynthesis; L-lysine biosynthesis via DAP pathway; (S)-tetrahydrodipicolinate from L-aspartate: step 3/4. Its function is as follows. Catalyzes the condensation of (S)-aspartate-beta-semialdehyde [(S)-ASA] and pyruvate to 4-hydroxy-tetrahydrodipicolinate (HTPA). The sequence is that of 4-hydroxy-tetrahydrodipicolinate synthase from Anaeromyxobacter sp. (strain K).